Consider the following 278-residue polypeptide: Ribosomal RNA small subunit methyltransferase A (278 aa).

Positions 27, 29, 54, 75, 101, and 122 each coordinate S-adenosyl-L-methionine.

This sequence belongs to the class I-like SAM-binding methyltransferase superfamily. rRNA adenine N(6)-methyltransferase family. RsmA subfamily.

It is found in the cytoplasm. The enzyme catalyses adenosine(1518)/adenosine(1519) in 16S rRNA + 4 S-adenosyl-L-methionine = N(6)-dimethyladenosine(1518)/N(6)-dimethyladenosine(1519) in 16S rRNA + 4 S-adenosyl-L-homocysteine + 4 H(+). Functionally, specifically dimethylates two adjacent adenosines (A1518 and A1519) in the loop of a conserved hairpin near the 3'-end of 16S rRNA in the 30S particle. May play a critical role in biogenesis of 30S subunits. The polypeptide is Ribosomal RNA small subunit methyltransferase A (Brucella anthropi (strain ATCC 49188 / DSM 6882 / CCUG 24695 / JCM 21032 / LMG 3331 / NBRC 15819 / NCTC 12168 / Alc 37) (Ochrobactrum anthropi)).